Reading from the N-terminus, the 164-residue chain is Transcriptional repressor NrdR (164 aa).

A zinc finger spans residues 3-34 (CPFCRHDDTQVVDSRVSEDGAAIRRRRRCPAC). One can recognise an ATP-cone domain in the interval 49-139 (PSVVKKDGSR…VYRRFEDVSE (91 aa)).

This sequence belongs to the NrdR family. Requires Zn(2+) as cofactor.

Negatively regulates transcription of bacterial ribonucleotide reductase nrd genes and operons by binding to NrdR-boxes. This is Transcriptional repressor NrdR from Paraburkholderia phymatum (strain DSM 17167 / CIP 108236 / LMG 21445 / STM815) (Burkholderia phymatum).